Here is a 258-residue protein sequence, read N- to C-terminus: Small ribosomal subunit protein uS2 (258 aa).

It belongs to the universal ribosomal protein uS2 family.

This chain is Small ribosomal subunit protein uS2, found in Streptococcus suis (strain 05ZYH33).